Consider the following 221-residue polypeptide: Translation initiation factor 6 (221 aa).

The protein belongs to the eIF-6 family.

Binds to the 50S ribosomal subunit and prevents its association with the 30S ribosomal subunit to form the 70S initiation complex. The polypeptide is Translation initiation factor 6 (Methanospirillum hungatei JF-1 (strain ATCC 27890 / DSM 864 / NBRC 100397 / JF-1)).